Consider the following 265-residue polypeptide: Putative hydro-lyase PA14_37210 (265 aa).

Belongs to the D-glutamate cyclase family.

This is Putative hydro-lyase PA14_37210 from Pseudomonas aeruginosa (strain UCBPP-PA14).